An 814-amino-acid chain; its full sequence is Glycosyltransferase GlyD (814 aa).

A GT8 domain region spans residues 1–264; it reads MNKTIVLAGD…SQILQHHMGE (264 aa). UDP is bound by residues 8–13 and 102–103; these read AGDRNY and DS. Positions 102, 104, and 226 each coordinate Mn(2+). A UDP-binding site is contributed by 226–232; sequence HFTTYRK. Residues 542 to 814 form a GT-D domain region; it reads EKPLDIIQVK…NSQIVARILN (273 aa).

The protein in the N-terminal section; belongs to the glycosyltransferase 8 family. This sequence in the C-terminal section; belongs to the GT-D family.

Its pathway is protein modification; protein glycosylation. Involved in the polymorphic O-glycosylation of the serine-rich repeat protein PsrP. Catalyzes the third step in glycosylation PsrP in this bacteria. Transfers glucose from UDP-glucose to the terminal glucose moiety of already-glycosylated PsrP (using truncated substrates with PsrP SSR1-GlcNAc-Glc); the C-terminal GT-D domain is sufficient for this reaction in vitro. Also transfers galactose from UDP-galactose to the terminal glucose moiety of already-glycosylated PsrP; the C-terminal GT-D domain is also sufficient for this reaction in vitro. Activity is much higher with UDP-glucose, and the enzyme has a very marked preference for PsrP substrate that has already been modified by GlcNAc and glucose. In vitro has hydrolytic activity against UDP-galactose and to a lesser extent against UDP-glucose. Functionally, also catalyzes the fourth step in glycosylation of PsrP in this bacteria. Can transfer the sugar from both UDP-glucose and UDP-galactose to the terminal sugar moiety of PsrP-GlcNAc-Glc-Glc and PsrP-GlcNAc-Glc-Gal; the C-terminal GT-D domain is also sufficient for this reaction in vitro (using truncated substrates with glycosylated PsrP SSR1). The N-terminal GT-D domain can transfer galactose from UDP-galactose to PsrP-GlcNAc-Glc-Gal or PsrP-GlcNAc-Glc-Glc in the fourth step. This is Glycosyltransferase GlyD from Streptococcus pneumoniae serotype 4 (strain ATCC BAA-334 / TIGR4).